Here is a 502-residue protein sequence, read N- to C-terminus: High affinity nitrate transporter 2.5 (502 aa).

12 consecutive transmembrane segments (helical) span residues 51-71 (WFQFFCCFVSTFAAPPLLPVI), 87-107 (IASVSGAVFARIVMGTACDLF), 111-131 (LASAALTLSTAPAVYFTAGIK), 133-153 (PIGFIMVRFFAGFSLATFVST), 172-192 (IAAGWGNLGGGATQLIMPIVF), 208-228 (IAFFIPGLFQTLSAFAVLLFG), 264-284 (WITALAYGYCFGVELTIDNII), 300-320 (GIIAASFGLANFFARPGGGIF), 334-354 (LWAWWIVQTSGGVLCACLGQI), 361-381 (IIVMLVFSVFVQAACGLTFGV), 393-413 (VSGMTGAGGNVGAVLTQLIFF), and 423-443 (GITLMGVMSIACSLPICLIYF). The interval 477–502 (LHIGSQKFAETSISERGRATTTHPQT) is disordered.

This sequence belongs to the major facilitator superfamily. Nitrate/nitrite porter (TC 2.A.1.8) family. As to quaternary structure, oligomeric molecular complex with NRT3.1. Expressed in roots, shoots and seeds. Expressed in leaves. Expressed in root hair zone of the primary root and the lateral roots, but not in the lateral root tip or in older parts of the roots. Detected mainly in the epidermis and the cortex. Expressed in shoots only in higher-order veins.

The protein resides in the cell membrane. Functionally, nitrate transporter involved in the constitutive high-affinity transport system (cHATS) under long-term N starvation conditions. Predominantly expressed in roots of nitrate-deprived plants as a 150 kDa molecular complex with NRT3.1 representing the major contributor to cHATS influx. The principal role of this cHATS is to enable roots previously deprived of nitrate to absorb this ion and initiate induction of nitrate-inducible genes. Not involved in transfer of nitrate from roots to shoots. Contributes to phloem loading of nitrate in shoots during N starvation, but not required for growth and nitrate uptake in young plants. Required for the nitrate uptake-independent plant growth promotion and lateral root response to the rhizospheric Phyllobacterium. Might be involved in the transfer of nitrate from stored pools to cytoplasm. The chain is High affinity nitrate transporter 2.5 (NRT2.5) from Arabidopsis thaliana (Mouse-ear cress).